Here is a 143-residue protein sequence, read N- to C-terminus: Regulator of ribonuclease activity B (143 aa).

The segment at 113-143 (EDPNAEEDEYGDDGEFFDDEDEADFNNAKVH) is disordered. Acidic residues predominate over residues 115–136 (PNAEEDEYGDDGEFFDDEDEAD).

It belongs to the RraB family. In terms of assembly, interacts with the C-terminal region of Rne.

The protein localises to the cytoplasm. Its function is as follows. Globally modulates RNA abundance by binding to RNase E (Rne) and regulating its endonucleolytic activity. Can modulate Rne action in a substrate-dependent manner by altering the composition of the degradosome. In Haemophilus ducreyi (strain 35000HP / ATCC 700724), this protein is Regulator of ribonuclease activity B.